A 62-amino-acid polypeptide reads, in one-letter code: Photosystem II reaction center protein Z (62 aa).

2 helical membrane-spanning segments follow: residues 8 to 28 (ALFA…VAFA) and 41 to 61 (FQGV…NSLV).

This sequence belongs to the PsbZ family. As to quaternary structure, PSII is composed of 1 copy each of membrane proteins PsbA, PsbB, PsbC, PsbD, PsbE, PsbF, PsbH, PsbI, PsbJ, PsbK, PsbL, PsbM, PsbT, PsbY, PsbZ, Psb30/Ycf12, at least 3 peripheral proteins of the oxygen-evolving complex and a large number of cofactors. It forms dimeric complexes.

The protein resides in the plastid. The protein localises to the chloroplast thylakoid membrane. Its function is as follows. May control the interaction of photosystem II (PSII) cores with the light-harvesting antenna, regulates electron flow through the 2 photosystem reaction centers. PSII is a light-driven water plastoquinone oxidoreductase, using light energy to abstract electrons from H(2)O, generating a proton gradient subsequently used for ATP formation. This chain is Photosystem II reaction center protein Z, found in Nephroselmis olivacea (Green alga).